The chain runs to 169 residues: Diuretic hormone 44 (169 aa).

The signal sequence occupies residues 1–18 (MILLGILASTTIIGLTSS). Positions 19 to 96 (APLSSYERRD…ARRKQERDQR (78 aa)) are excised as a propeptide. Residues 83-108 (MLELARRKQERDQRQIEENRRFLENI) are a coiled coil. At Gln97 the chain carries Pyrrolidone carboxylic acid. Ile108 is modified (isoleucine amide). The propeptide occupies 109-169 (GKRSVPVSDA…RVQANELRLL (61 aa)).

Residues Ile-66 to Gly-109 may constitute another form of the DH44 peptide, which has not been detected yet. Expressed in brain, ventral ganglia and the retrocerebral complex (at protein level).

It is found in the secreted. Functionally, regulation of fluid secretion. In Camponotus floridanus (Florida carpenter ant), this protein is Diuretic hormone 44.